A 264-amino-acid polypeptide reads, in one-letter code: Major prion protein (264 aa).

The first 24 residues, 1-24 (MVKSHIGSWILVLFVAMWSDVGLC), serve as a signal peptide directing secretion. The tract at residues 25-241 (KKRPKPGGGW…ESQAYYQRGA (217 aa)) is interaction with GRB2, ERI3 and SYN1. The segment at 28 to 118 (PKPGGGWNTG…QWNKPSKPKT (91 aa)) is disordered. Low complexity predominate over residues 37–54 (GGSRYPGPGSPGGNRYPP). A run of 6 repeats spans residues 54-62 (PQGGGGWGQ), 63-70 (PHGGGWGQ), 71-78 (PHGGGWGQ), 79-86 (PHGGGWGQ), 87-94 (PHGGGWGQ), and 95-103 (PHGGGGWGQ). The interval 54 to 103 (PQGGGGWGQPHGGGWGQPHGGGWGQPHGGGWGQPHGGGWGQPHGGGGWGQ) is 6 X 8 AA tandem repeats of P-H-G-G-G-W-G-Q. The span at 55-107 (QGGGGWGQPHGGGWGQPHGGGWGQPHGGGWGQPHGGGWGQPHGGGGWGQGGTH) shows a compositional bias: gly residues. Cu(2+) contacts are provided by H72, G73, G74, H80, G81, G82, H88, G89, G90, H96, and G98. An intrachain disulfide couples C190 to C225. N-linked (GlcNAc...) asparagine glycans are attached at residues N192 and N208. A241 is lipidated: GPI-anchor amidated alanine. Positions 242-264 (SVILFSSPPVILLISFLIFLIVG) are cleaved as a propeptide — removed in mature form.

This sequence belongs to the prion family. In terms of assembly, monomer and homodimer. Has a tendency to aggregate into amyloid fibrils containing a cross-beta spine, formed by a steric zipper of superposed beta-strands. Soluble oligomers may represent an intermediate stage on the path to fibril formation. Copper binding may promote oligomerization. Interacts with GRB2, APP, ERI3/PRNPIP and SYN1. Mislocalized cytosolically exposed PrP interacts with MGRN1; this interaction alters MGRN1 subcellular location and causes lysosomal enlargement. Interacts with KIAA1191.

Its subcellular location is the cell membrane. The protein localises to the golgi apparatus. Its function is as follows. Its primary physiological function is unclear. Has cytoprotective activity against internal or environmental stresses. May play a role in neuronal development and synaptic plasticity. May be required for neuronal myelin sheath maintenance. May play a role in iron uptake and iron homeostasis. Soluble oligomers are toxic to cultured neuroblastoma cells and induce apoptosis (in vitro). Association with GPC1 (via its heparan sulfate chains) targets PRNP to lipid rafts. Also provides Cu(2+) or Zn(2+) for the ascorbate-mediated GPC1 deaminase degradation of its heparan sulfate side chains. This is Major prion protein (PRNP) from Ailuropoda melanoleuca (Giant panda).